The following is a 170-amino-acid chain: Large ribosomal subunit protein uL10 (170 aa).

The protein belongs to the universal ribosomal protein uL10 family. In terms of assembly, part of the ribosomal stalk of the 50S ribosomal subunit. The N-terminus interacts with L11 and the large rRNA to form the base of the stalk. The C-terminus forms an elongated spine to which L12 dimers bind in a sequential fashion forming a multimeric L10(L12)X complex.

Forms part of the ribosomal stalk, playing a central role in the interaction of the ribosome with GTP-bound translation factors. This is Large ribosomal subunit protein uL10 from Chlamydia caviae (strain ATCC VR-813 / DSM 19441 / 03DC25 / GPIC) (Chlamydophila caviae).